We begin with the raw amino-acid sequence, 61 residues long: Putative MSV199 domain-containing protein 200R (61 aa).

The polypeptide is Putative MSV199 domain-containing protein 200R (Invertebrate iridescent virus 6 (IIV-6)).